A 300-amino-acid chain; its full sequence is Protoheme IX farnesyltransferase 1 (300 aa).

A run of 9 helical transmembrane segments spans residues 28–48 (VVALMLLTVLVGMCLAMPTIL), 54–74 (VAGLLGIAMMAGSAAALNHLI), 100–120 (ALLFAALLGCLGFVILYVFTN), 122–142 (LTAWLTFASLIGYALIYTAYL), 149–169 (NIVIGGLAGAMPPLLGWTAVT), 176–196 (ALLLVIIIFLWTPPHFWALAI), 222–242 (CILLYTILLAMACLLPVLVGM), 243–263 (SGPLYFVCSSLLSTGFIYKAW), and 280–300 (FSIYHLMLLFMALLLDHYLWA).

It belongs to the UbiA prenyltransferase family. Protoheme IX farnesyltransferase subfamily.

It is found in the cell inner membrane. It carries out the reaction heme b + (2E,6E)-farnesyl diphosphate + H2O = Fe(II)-heme o + diphosphate. It functions in the pathway porphyrin-containing compound metabolism; heme O biosynthesis; heme O from protoheme: step 1/1. Converts heme B (protoheme IX) to heme O by substitution of the vinyl group on carbon 2 of heme B porphyrin ring with a hydroxyethyl farnesyl side group. The protein is Protoheme IX farnesyltransferase 1 of Shewanella sp. (strain ANA-3).